We begin with the raw amino-acid sequence, 428 residues long: MSNKIQAIRGMNDLLPEQSPVWQYFERQIQHLMQRYGYNEIRTPILEQTALFKRSIGEVTDIVEKEMYTFEDRNGDSLTLRPEGTASCVRAALENGLLYNQTQRLWYQGPMFRHERPQKGRYRQFHQVGVEAYGMLGPDIDFEMILLSARLWDALGLMPHVRLELNSLGSSEARAAYRDALVAYFEAHAEVLDEDSRRRLTSNPLRILDSKNPDMAEMLEAAPRLMDHLDDESRAHFEQLTAMLDAAGIDYVINPRLVRGLDYYSRTVFEWTTQALGSQGTVCAGGRYDGLVEQLGGKPTPGVGFAMGVERLILLLETLDLVPEAARSRPDVYLTAMGDTASREAMLLGEHLRDALPEMHLQVHCGGGSFKSQIKKADKSGARIALMLGDDEIASGSVGIKFLREDREQESVAREALAARLQALLAED.

The protein belongs to the class-II aminoacyl-tRNA synthetase family. As to quaternary structure, homodimer.

It is found in the cytoplasm. The catalysed reaction is tRNA(His) + L-histidine + ATP = L-histidyl-tRNA(His) + AMP + diphosphate + H(+). The sequence is that of Histidine--tRNA ligase from Chromohalobacter salexigens (strain ATCC BAA-138 / DSM 3043 / CIP 106854 / NCIMB 13768 / 1H11).